The sequence spans 342 residues: Pre-mRNA-splicing factor 18 (342 aa).

The protein belongs to the PRP18 family. As to quaternary structure, interacts with the spliceosome. Part of a complex containing U4/U6 snRNPs.

The protein localises to the nucleus speckle. In terms of biological role, participates in the second step of pre-mRNA splicing. The sequence is that of Pre-mRNA-splicing factor 18 (prpf18) from Danio rerio (Zebrafish).